Consider the following 412-residue polypeptide: Phosphatidylinositol 3,4,5-trisphosphate 3-phosphatase and protein-tyrosine-phosphatase PTEN1 (412 aa).

The Phosphatase tensin-type domain occupies 42-211 (RRLIIGGYDL…KYWSDLLSFS (170 aa)). The Phosphocysteine intermediate role is filled by Cys152. Positions 239-396 (VDSVFFVVSE…FSLELLFGPA (158 aa)) constitute a C2 tensin-type domain.

Belongs to the PTEN phosphatase protein family. Expressed exclusively in pollen grains during the late stage of development (at protein level).

The catalysed reaction is O-phospho-L-tyrosyl-[protein] + H2O = L-tyrosyl-[protein] + phosphate. It carries out the reaction a 1,2-diacyl-sn-glycero-3-phospho-(1D-myo-inositol-3,4,5-trisphosphate) + H2O = a 1,2-diacyl-sn-glycero-3-phospho-(1D-myo-inositol-4,5-bisphosphate) + phosphate. With respect to regulation, inhibited by vanadate. Protein tyrosine phosphatase that also exhibits lipid phosphatase activity. Can use phosphatidylinositol substrates such as PtdIns(3,4,5)P(3) as substrate. Pollen-specific phosphatase required for pollen development. The protein is Phosphatidylinositol 3,4,5-trisphosphate 3-phosphatase and protein-tyrosine-phosphatase PTEN1 of Arabidopsis thaliana (Mouse-ear cress).